The chain runs to 413 residues: MDGDIRHNSYDDGSEDVLTGEQSIRNFNINFGPQHPAAHGVLRMVLELDGEIVERADPHIGLLHRGTEKLMESRTYLQNTPYFDRLDYVAPMNQEHAWCLAIEKLTGTAVPRRASIIRVLFSEIGRILNHLLNVTTQAMDVGALTPPLWGFEEREKLMIFYERACGARLHANYFRPGGVHQDLPPDLIDDIEIWAKAFPQVLDDIEGLLTENRIFKQRNADICIITEAEIEKWGYSGVMVRGSGLAWDLRRAQPYECYDEFDFKVAVGKNGDCYDRYLVRMAEMRESTKIILQACAKLRAPDGQGDILARGKLTPPKRAEMKTSMEALIHHFKLYTEGFKVPAGEVYAAVEAPKGEFGVYLVADGTNKPYRAKIRAPGYAHLQSIDAVAKGHQLADVSAIIGTMDVVFGEIDR.

This sequence belongs to the complex I 49 kDa subunit family. NDH-1 is composed of 14 different subunits. Subunits NuoB, C, D, E, F, and G constitute the peripheral sector of the complex.

Its subcellular location is the cell inner membrane. The catalysed reaction is a quinone + NADH + 5 H(+)(in) = a quinol + NAD(+) + 4 H(+)(out). Its function is as follows. NDH-1 shuttles electrons from NADH, via FMN and iron-sulfur (Fe-S) centers, to quinones in the respiratory chain. The immediate electron acceptor for the enzyme in this species is believed to be ubiquinone. Couples the redox reaction to proton translocation (for every two electrons transferred, four hydrogen ions are translocated across the cytoplasmic membrane), and thus conserves the redox energy in a proton gradient. The chain is NADH-quinone oxidoreductase subunit D from Rhodobacter capsulatus (Rhodopseudomonas capsulata).